The chain runs to 413 residues: Protein CDKN2AIP homolog B (413 aa).

The 98-residue stretch at Leu21 to Val118 folds into the XRN2-binding (XTBD) domain. Positions Val118 to Thr266 are disordered. A compositionally biased stretch (basic and acidic residues) spans Asn183 to Val193.

This sequence belongs to the CARF family.

It is found in the nucleus. It localises to the nucleoplasm. Functionally, may regulate DNA damage response and cell proliferation. This chain is Protein CDKN2AIP homolog B (cdkn2aip-b), found in Xenopus laevis (African clawed frog).